A 324-amino-acid chain; its full sequence is MQDFLALTLQGEQPATREGKQANFSWRWLGEGLLECTPHAQYDKAVVLSAGVHGNETAPIELLSHLCTDLFAGRLKLAVRLLLVLGNPYAMRQGKRYVHDDVNRMFCGGYKNLPVTEESKRAEVLEQTVATFFQESSSQAKRYHYDLHTAIRASLLPTFALFPYQTHSYDADLTASLEAADLDALVYHNAVGKTFTHFTSENFKAASATLELGKALPFGQNDLSQFASIDEVIRNVVSEQALPVRNKPKIRVFQVSDSLIKKDEEFHMNLSAEAPNFSTFTKGEIIATQPSGNYVVEQDQVWILFPNPNVKIGLRAGLVLTETI.

Zn(2+) contacts are provided by His-53, Glu-56, and His-148. The active site involves Glu-211.

The protein belongs to the AspA/AstE family. Succinylglutamate desuccinylase subfamily. The cofactor is Zn(2+).

It carries out the reaction N-succinyl-L-glutamate + H2O = L-glutamate + succinate. The protein operates within amino-acid degradation; L-arginine degradation via AST pathway; L-glutamate and succinate from L-arginine: step 5/5. Transforms N(2)-succinylglutamate into succinate and glutamate. This chain is Succinylglutamate desuccinylase, found in Acinetobacter baumannii (strain SDF).